Here is a 475-residue protein sequence, read N- to C-terminus: UDP-glycosyltransferase 1 (475 aa).

The active-site Proton acceptor is His15. An an anthocyanidin-binding site is contributed by His15. Asp117 serves as the catalytic Charge relay. Residues Ala345, Gln347, His362, Trp365, Asn366, Ser367, and Glu370 each contribute to the UDP-alpha-D-glucose site. Residue Gly385 coordinates an anthocyanidin. Residues Glu386 and Gln387 each coordinate UDP-alpha-D-glucose.

It belongs to the UDP-glycosyltransferase family. As to expression, mostly expressed in leaves and flowers, and, to a lower extent, in roots and stems.

The enzyme catalyses (20S)-protopanaxadiol + UDP-alpha-D-glucose = (20S)-ginsenoside C-K + UDP + H(+). The catalysed reaction is (20S)-ginsenoside Rg3 + UDP-alpha-D-glucose = (20S)-ginsenoside Rd + UDP + H(+). It carries out the reaction (20S)-ginsenoside Rh2 + UDP-alpha-D-glucose = (20S)-ginsenoside F2 + UDP + H(+). It catalyses the reaction (20S)-protopanaxatriol + UDP-alpha-D-glucose = (20S)-ginsenoside F1 + UDP + H(+). The enzyme catalyses dammarenediol-II + UDP-alpha-D-glucose = (20S)-20-O-(beta-D-glucosyl)-3-hydroxydammarene + UDP + H(+). The protein operates within secondary metabolite biosynthesis; terpenoid biosynthesis. Functionally, component of the dammarane-type triterpene saponins (e.g. ginsenosides or panaxosides) biosynthetic pathway. Glycosyltransferase that catalyzes the biosynthesis of ginsenoside F1 from protopanaxatriol (PPT). Triggers C20-OH glycosylation of ginsenoside Rg3 to produce ginsenoside Rd. Mediates the conversion of protopanaxadiol (PPD) to the ginsenoside compound K. catalyzes the production of 20S-O-beta-(D-glucosyl)-dammarenediol II form dammarenediol II (DM). This is UDP-glycosyltransferase 1 from Panax ginseng (Korean ginseng).